We begin with the raw amino-acid sequence, 190 residues long: Guanylate kinase (190 aa).

A Guanylate kinase-like domain is found at 8-186; the sequence is ARPTVLTGPS…ALAELEKQMN (179 aa). An ATP-binding site is contributed by 15-22; that stretch reads GPSGVGKG.

Belongs to the guanylate kinase family.

The protein localises to the cytoplasm. It catalyses the reaction GMP + ATP = GDP + ADP. The catalysed reaction is dZMP + ATP = dZDP + ADP. The protein operates within purine metabolism. Functionally, essential for recycling GMP and indirectly, cGMP. (Microbial infection) Catalyzes the phosphorylation of dZMP to dZDP, when the bacterium is infected by a phage that produces the substrate for the synthesis of dZTP (2- amino-2'-deoxyadenosine 5'-triphosphate), which is then used by the phage as a DNA polymerase substrate. The chain is Guanylate kinase from Synechococcus sp. (strain CC9311).